The sequence spans 1033 residues: Collagen alpha-2(I) chain (1033 aa).

The disordered stretch occupies residues 1–1033 (SGGFDFSFLP…FGYEGDFYRA (1033 aa)). Composition is skewed to low complexity over residues 25–71 (LGPG…ARGP), 154–175 (SRGS…SAGP), and 221–242 (PGAN…AGAP). Residues 276–285 (GESGGKGEPG) are compositionally biased toward gly residues. Residues 286 to 296 (SAGPQGPPGSS) show a composition bias toward low complexity. Positions 318-327 (GLRGGPGSRG) are enriched in gly residues. Composition is skewed to low complexity over residues 340 to 356 (PAGA…RGPS) and 391 to 410 (LPGI…RGEA). Gly residues predominate over residues 459 to 468 (GVQGGKGEQG). Low complexity-rich tracts occupy residues 519-528 (PSGAIGSRGP) and 540-550 (EPGVVGAPGTA). The span at 551 to 560 (GPAGSGGLPG) shows a compositional bias: gly residues. Low complexity-rich tracts occupy residues 583 to 627 (VGTT…PRGS) and 634 to 654 (VGPA…QPGA). The span at 655 to 664 (KGERGTKGPK) shows a compositional bias: basic and acidic residues. The segment covering 672–682 (PTGPVGSAGPA) has biased composition (low complexity). The span at 692–701 (GSRGDGGPPG) shows a compositional bias: gly residues. Positions 703–712 (TGFPGAAGRT) are enriched in low complexity. A compositionally biased stretch (gly residues) spans 749–758 (GETGAGGPPG). Composition is skewed to low complexity over residues 766-793 (SGEP…LGLP) and 801-811 (LPGVAGAVGEP). Gly residues predominate over residues 812–834 (GPLGIGPPGARGPSGGVGPGVNG). Over residues 873–909 (AAGAPGPHGAVGPAGKHGNRGEPGPVGSAGPVGALGP) the composition is skewed to low complexity. Residues 919–930 (RGDKGEAGDKGP) are compositionally biased toward basic and acidic residues. Pro residues predominate over residues 1003 to 1015 (SGPPGPPGPPGPP).

The protein belongs to the fibrillar collagen family. In terms of assembly, trimers of one alpha 2(I) and two alpha 1(I) chains. Interacts (via C-terminus) with TMEM131 (via PapD-L domain); the interaction is direct and is involved in assembly and TRAPPIII ER-to-Golgi transport complex-dependent secretion of collagen. Post-translationally, prolines at the third position of the tripeptide repeating unit (G-X-Y) are hydroxylated in some or all of the chains. As to expression, expressed in bone.

It is found in the secreted. The protein resides in the extracellular space. The protein localises to the extracellular matrix. In terms of biological role, type I collagen is a member of group I collagen (fibrillar forming collagen). The chain is Collagen alpha-2(I) chain from Mylodon darwinii (Giant ground sloth).